We begin with the raw amino-acid sequence, 1748 residues long: Tight junction protein 1 (1748 aa).

Residues 23–110 (TVTLHRAPGF…NAKITIRRKK (88 aa)) enclose the PDZ 1 domain. Positions 102-112 (AKITIRRKKKV) are enriched in basic residues. The tract at residues 102–189 (AKITIRRKKK…QPAKPTKVTL (88 aa)) is disordered. The span at 123–136 (PVSDNEEDSYDEEI) shows a compositional bias: acidic residues. Serine 125 carries the post-translational modification Phosphoserine. At tyrosine 132 the chain carries Phosphotyrosine. Over residues 149–175 (RRSEKIWPRDRSASRERSLSPRSDRRS) the composition is skewed to basic and acidic residues. A phosphoserine mark is found at serine 175, serine 178, and serine 179. Threonine 185 carries the post-translational modification Phosphothreonine. A PDZ 2 domain is found at 186–264 (KVTLVKSRKN…KLKMVVQRDE (79 aa)). Residues serine 212 and serine 241 each carry the phosphoserine modification. Position 267 is a phosphothreonine (threonine 267). Serine 275, serine 277, serine 280, serine 284, serine 290, serine 294, serine 297, serine 300, serine 323, serine 329, serine 334, serine 337, and serine 353 each carry phosphoserine. Residues 295-396 (LASDHSGRSH…PVYAQVGQPD (102 aa)) are disordered. The segment covering 299–327 (HSGRSHDRPPRRSRSRSPDQRSEPSDHSR) has biased composition (basic and acidic residues). The segment covering 329–338 (SPQQPSNGSL) has biased composition (polar residues). Threonine 354 carries the phosphothreonine modification. Residues 357–377 (KHADDHTPKTVEEVTVERNEK) show a composition bias toward basic and acidic residues. In terms of domain architecture, PDZ 3 spans 421–502 (SMKLVKFRKG…GEEVTILAQK (82 aa)). The SH3 domain maps to 516-584 (GDSFYIRTHF…PNKNRAEQLA (69 aa)). Positions 598–779 (RADFWRFRGL…TTTINLNSMN (182 aa)) constitute a Guanylate kinase-like domain. 2 positions are modified to phosphoserine: serine 617 and serine 622. Positions 633 to 876 (YERVVLREAG…GTPPESAITR (244 aa)) are occludin (OCLN)-binding region. Threonine 809 carries the phosphothreonine modification. Serine 810 and serine 821 each carry phosphoserine. Tyrosine 822 is modified (phosphotyrosine). Serine 824, serine 828, and serine 837 each carry phosphoserine. 2 disordered regions span residues 825–1081 (APGS…LRYE) and 1095–1587 (DDKQ…PEFD). 5 positions are modified to phosphothreonine: threonine 846, threonine 848, threonine 854, threonine 861, and threonine 868. Residues 879 to 892 (EPVREDSSGMHHEN) show a composition bias toward basic and acidic residues. A compositionally biased stretch (low complexity) spans 893 to 906 (QTYPPYSPQAQPQP). Serine 912 carries the phosphoserine modification. Polar residues-rich tracts occupy residues 934–953 (PETN…NLTN) and 963–979 (PSTS…TPST). At serine 968 the chain carries Phosphoserine. Residues 998–1014 (DPTKVYRKDPYPEEMMR) show a composition bias toward basic and acidic residues. The segment covering 1061-1072 (YESSSYTDQFSR) has biased composition (polar residues). 3 positions are modified to phosphoserine: serine 1071, serine 1111, and serine 1139. Over residues 1110-1125 (HSQDLDSRQHPEESSE) the composition is skewed to basic and acidic residues. Residues tyrosine 1140 and tyrosine 1165 each carry the phosphotyrosine modification. The actin-binding region (ABR) stretch occupies residues 1151–1371 (RASALRHEEQ…FDRRSFENKP (221 aa)). Basic and acidic residues-rich tracts occupy residues 1269–1286 (KMFE…KDVN) and 1336–1347 (PPEDIVRSNHYD). Tyrosine 1354 carries the post-translational modification Phosphotyrosine. The residue at position 1366 (serine 1366) is a Phosphoserine. Residues 1389–1400 (SQNQSNFSSYSS) are compositionally biased toward low complexity. A compositionally biased stretch (basic and acidic residues) spans 1403–1420 (KPPEADGVDRSFGEKRYE). At serine 1413 the chain carries Phosphoserine. Polar residues-rich tracts occupy residues 1459–1470 (NSVSLDFQNSLV) and 1512–1522 (GTEQTQKTVTP). Basic and acidic residues predominate over residues 1538–1547 (PFERKFESPK). Phosphoserine is present on residues serine 1545 and serine 1617. In terms of domain architecture, ZU5 spans 1634–1748 (ATARGIFNSN…NCVSVLIDHF (115 aa)).

The protein belongs to the MAGUK family. As to quaternary structure, homodimer. Forms heterodimers TJP3. Forms a heterodimer (via PDZ2 domain) with TJP2/ZO2 (via PDZ2 domain). Interacts with OCLN, CALM, claudins, CGN/cingulin, CXADR, GJA12, GJD3 and UBN1. Interacts (via ZU5 domain) with CDC42BPB and MYZAP. Interacts (via PDZ domain) with GJA1. Interacts (via PDZ domains) with ANKRD2. Interacts with POPDC1 (via the C-terminus cytoplasmic tail). Interacts with HSPA4 and KIRREL1. Interacts with DLL1. Interacts with USP53 (via the C-terminal region). Interacts (via ABR region) with F-actin. Interacts with DNMBP (via C-terminal domain); required for the apical cell-cell junction localization of DNMBP. Interacts with SPEF1. Interacts (via N-terminus) with CTNNA1. Interacts with CLDN18. Interacts with CLDN16 (via TRV motif); this is a prerequisite for anchoring of CLDN16 at the tight junction. Interacts with PKP1; the interaction facilitates TJP1/ZO-1 localization to the plasma membrane. Interacts with PATJ (via PDZ1-6 domains); the interaction is required for attachment and extension of TJP1/ZO1 condensates along the apical cell interface. In terms of processing, phosphorylated at tyrosine redidues in response to epidermal growth factor (EGF). This response is dependent on an intact actin microfilament system. Dephosphorylated by PTPRJ. The alpha-containing isoform is found in most epithelial cell junctions. The short isoform is found both in endothelial cells and the highly specialized epithelial junctions of renal glomeruli and Sertoli cells of the seminiferous tubules.

It is found in the cell membrane. The protein localises to the cell junction. It localises to the tight junction. Its subcellular location is the gap junction. The protein resides in the cell projection. It is found in the podosome. In terms of biological role, TJP1, TJP2, and TJP3 are closely related scaffolding proteins that link tight junction (TJ) transmembrane proteins such as claudins, junctional adhesion molecules, and occludin to the actin cytoskeleton. Forms a multistranded TJP1/ZO1 condensate which elongates to form a tight junction belt, the belt is anchored at the apical cell membrane via interaction with PATJ. The tight junction acts to limit movement of substances through the paracellular space and as a boundary between the compositionally distinct apical and basolateral plasma membrane domains of epithelial and endothelial cells. Necessary for lumenogenesis, and particularly efficient epithelial polarization and barrier formation. Plays a role in the regulation of cell migration by targeting CDC42BPB to the leading edge of migrating cells. Plays an important role in podosome formation and associated function, thus regulating cell adhesion and matrix remodeling. With TJP2 and TJP3, participates in the junctional retention and stability of the transcription factor DBPA, but is not involved in its shuttling to the nucleus. May play a role in mediating cell morphology changes during ameloblast differentiation via its role in tight junctions. This Homo sapiens (Human) protein is Tight junction protein 1.